A 534-amino-acid polypeptide reads, in one-letter code: T-complex protein 1 subunit gamma (534 aa).

At Met-1 the chain carries N-acetylmethionine. Ser-257 is modified (phosphoserine). Cys-371 and Cys-377 are oxidised to a cystine.

Belongs to the TCP-1 chaperonin family. In terms of assembly, heterooligomeric complex of about 850 to 900 kDa that forms two stacked rings, 12 to 16 nm in diameter.

Its subcellular location is the cytoplasm. Functionally, molecular chaperone; assists the folding of proteins upon ATP hydrolysis. Known to play a role, in vitro, in the folding of actin and tubulin. In yeast may play a role in mitotic spindle formation. The chain is T-complex protein 1 subunit gamma (CCT3) from Saccharomyces cerevisiae (strain ATCC 204508 / S288c) (Baker's yeast).